The following is a 262-amino-acid chain: 14-3-3-like protein GF14-E (262 aa).

It belongs to the 14-3-3 family. In terms of tissue distribution, ubiquitous.

It localises to the cytoplasm. It is found in the nucleus. In terms of biological role, is associated with a DNA binding complex that binds to the G box, a well-characterized cis-acting DNA regulatory element found in plant genes. The polypeptide is 14-3-3-like protein GF14-E (GF14E) (Oryza sativa subsp. japonica (Rice)).